We begin with the raw amino-acid sequence, 163 residues long: Halocyanin (163 aa).

Positions 1–24 (MKDISRRRFVLGTGATVAAATLAG) are cleaved as a signal peptide. At C25 the chain carries N-acetylcysteine. C25 carries S-archaeol cysteine lipidation. Residues 26–38 (NGNGNGNGNGNGN) are compositionally biased toward gly residues. The disordered stretch occupies residues 26–48 (NGNGNGNGNGNGNGEPDTPEGRA). The Plastocyanin-like domain occupies 48–163 (ADQFLTDNDA…QGMYGAVIVE (116 aa)). Cu cation contacts are provided by H110, C148, H151, and M156.

It is found in the cell membrane. Its function is as follows. Electron donor. Binds one copper ion. The protein is Halocyanin (hcy) of Natronomonas pharaonis (Natronobacterium pharaonis).